The following is a 150-amino-acid chain: D-aminoacyl-tRNA deacylase (150 aa).

The short motif at 138 to 139 (GP) is the Gly-cisPro motif, important for rejection of L-amino acids element.

This sequence belongs to the DTD family. In terms of assembly, homodimer.

The protein resides in the cytoplasm. It catalyses the reaction glycyl-tRNA(Ala) + H2O = tRNA(Ala) + glycine + H(+). The catalysed reaction is a D-aminoacyl-tRNA + H2O = a tRNA + a D-alpha-amino acid + H(+). An aminoacyl-tRNA editing enzyme that deacylates mischarged D-aminoacyl-tRNAs. Also deacylates mischarged glycyl-tRNA(Ala), protecting cells against glycine mischarging by AlaRS. Acts via tRNA-based rather than protein-based catalysis; rejects L-amino acids rather than detecting D-amino acids in the active site. By recycling D-aminoacyl-tRNA to D-amino acids and free tRNA molecules, this enzyme counteracts the toxicity associated with the formation of D-aminoacyl-tRNA entities in vivo and helps enforce protein L-homochirality. The protein is D-aminoacyl-tRNA deacylase of Natranaerobius thermophilus (strain ATCC BAA-1301 / DSM 18059 / JW/NM-WN-LF).